Consider the following 330-residue polypeptide: MPVNLKGRSFLTLKDFTSQEIQHLLDLSRDLKAKKRMGVKGESLLGKNIVLLFEKASTRTRCAFEVAALDEGAHVTFLGSNDSQIGKKESIEDTAKVLGRFYDGMEFRGFKQETVETLAAHAGIPVWNGLTDLYHPTQILADFLTIMEHIDKPLNKVKFAYVGDARNNMGNSLMIGAAKMGMDFRAVAPKELLPKGELVEEMRAVAAETGGEITLTDDVAEGVKDADVIYTDVWVSMGEEDQFEVRIKQLLPYQVNMDMIKATGNPDMIFMHCLPAFHDLETTVGKEIHEKFGLKSMEVTDEVFRSRHSVVFDEAENRLHTIKAIMVATL.

Carbamoyl phosphate is bound by residues serine 57–threonine 60, glutamine 84, arginine 108, and histidine 135–glutamine 138. Residues asparagine 168, aspartate 232, and serine 236–methionine 237 contribute to the L-ornithine site. Residues cysteine 273–leucine 274 and arginine 318 each bind carbamoyl phosphate.

The protein belongs to the aspartate/ornithine carbamoyltransferase superfamily. OTCase family.

Its subcellular location is the cytoplasm. The catalysed reaction is carbamoyl phosphate + L-ornithine = L-citrulline + phosphate + H(+). It functions in the pathway amino-acid biosynthesis; L-arginine biosynthesis; L-arginine from L-ornithine and carbamoyl phosphate: step 1/3. Reversibly catalyzes the transfer of the carbamoyl group from carbamoyl phosphate (CP) to the N(epsilon) atom of ornithine (ORN) to produce L-citrulline. The protein is Ornithine carbamoyltransferase of Alkaliphilus metalliredigens (strain QYMF).